The following is a 225-amino-acid chain: MAVRSLWACRLRVQRLLAWSAAWESKGWPLPFSTATQRTAGEDCRSEDPPDELGPPLAERALRVKAVKLEKEVQDLTVRYQRAVADCENIRRRTQRCVEDAKIFGIQSFCKDLVEVADILEKTTECISEESEPEDQKLTLEKVFRGLLLLEAKLKSVFAKHGLEKLTPIGDKYDPHEHELICHVPAGVGVQPGTVALVRQDGYKLHGRTIRLARVEVAVESQRRL.

The transit peptide at 1-32 (MAVRSLWACRLRVQRLLAWSAAWESKGWPLPF) directs the protein to the mitochondrion. At Lys142 the chain carries N6-acetyllysine.

The protein belongs to the GrpE family. Probable component of the PAM complex at least composed of a mitochondrial HSP70 protein, GRPEL1 or GRPEL2, TIMM44, TIMM16/PAM16 and TIMM14/DNAJC19.

It is found in the mitochondrion matrix. Essential component of the PAM complex, a complex required for the translocation of transit peptide-containing proteins from the inner membrane into the mitochondrial matrix in an ATP-dependent manner. Seems to control the nucleotide-dependent binding of mitochondrial HSP70 to substrate proteins. Stimulates ATPase activity of mt-HSP70. May also serve to modulate the interconversion of oligomeric (inactive) and monomeric (active) forms of mt-HSP70. The polypeptide is GrpE protein homolog 2, mitochondrial (GRPEL2) (Pongo abelii (Sumatran orangutan)).